Reading from the N-terminus, the 171-residue chain is Dual specificity protein phosphatase OPG106 (171 aa).

The 149-residue stretch at 23–171 (SPTIMTRVTN…IIEKYVIDKN (149 aa)) folds into the Tyrosine-protein phosphatase domain. The Phosphocysteine intermediate role is filled by Cys110.

It belongs to the protein-tyrosine phosphatase family. Non-receptor class dual specificity subfamily. Homodimer.

It is found in the virion. It localises to the host cytoplasm. The enzyme catalyses O-phospho-L-tyrosyl-[protein] + H2O = L-tyrosyl-[protein] + phosphate. It carries out the reaction O-phospho-L-seryl-[protein] + H2O = L-seryl-[protein] + phosphate. Functionally, serine/tyrosine phosphatase which down-regulates cellular antiviral response by dephosphorylating activated host STAT1 and blocking interferon (IFN)-stimulated innate immune responses. Dephosphorylates the OPG144 protein. This Homo sapiens (Human) protein is Dual specificity protein phosphatase OPG106 (OPG106).